Here is a 2555-residue protein sequence, read N- to C-terminus: Neurogenic locus notch homolog protein 1 (2555 aa).

Residues 1–18 (MPPLLAPLLCLALLPALA) form the signal peptide. The Extracellular portion of the chain corresponds to 19–1735 (ARGPRCSQPG…VEPPPPAQLH (1717 aa)). EGF-like domains are found at residues 20–58 (RGPRCSQPGETCLNGGKCEAANGTEACVCGGAFVGPRCQ), 59–99 (DPNP…PLCL), 102–139 (LDNACLTNPCRNGGTCDLLTLTEYKCRCPPGWSGKSCQ), and 140–176 (QADPCASNPCANGGQCLPFEASYICHCPPSFHGPTCR). Intrachain disulfides connect Cys-24–Cys-37, Cys-31–Cys-46, Cys-48–Cys-57, Cys-63–Cys-74, Cys-68–Cys-87, Cys-89–Cys-98, Cys-106–Cys-117, Cys-111–Cys-127, Cys-129–Cys-138, Cys-144–Cys-155, Cys-149–Cys-164, Cys-166–Cys-175, Cys-182–Cys-195, Cys-189–Cys-204, Cys-206–Cys-215, Cys-222–Cys-233, Cys-227–Cys-243, Cys-245–Cys-254, Cys-261–Cys-272, Cys-266–Cys-281, Cys-283–Cys-292, Cys-299–Cys-312, Cys-306–Cys-321, Cys-323–Cys-332, Cys-339–Cys-350, Cys-344–Cys-359, Cys-361–Cys-370, Cys-376–Cys-387, Cys-381–Cys-398, Cys-400–Cys-409, Cys-416–Cys-429, Cys-423–Cys-438, and Cys-440–Cys-449. Residue Asn-41 is glycosylated (N-linked (GlcNAc...) asparagine). The O-linked (Glc...) serine glycan is linked to Ser-65. Thr-73 carries an O-linked (Fuc...) threonine glycan. Thr-116 is a glycosylation site (O-linked (Fuc...) threonine). O-linked (Glc...) serine glycosylation occurs at Ser-146. An EGF-like 5; calcium-binding domain is found at 178 to 216 (DVNECGQKPGLCRHGGTCHNEVGSYRCVCRATHTGPNCE). O-linked (Fuc...) threonine glycosylation occurs at Thr-194. The 38-residue stretch at 218 to 255 (PYVPCSPSPCQNGGTCRPTGDVTHECACLPGFTGQNCE) folds into the EGF-like 6 domain. Residue Thr-232 is glycosylated (O-linked (Fuc...) threonine; alternate). O-linked (GalNAc...) threonine; alternate glycosylation is present at Thr-232. Residues 257–293 (NIDDCPGNNCKNGGACVDGVNTYNCRCPPEWTGQYCT) enclose the EGF-like 7; calcium-binding domain. The region spanning 295–333 (DVDECQLMPNACQNGGTCHNTHGGYNCVCVNGWTGEDCS) is the EGF-like 8; calcium-binding domain. An O-linked (Fuc...) threonine glycan is attached at Thr-311. Positions 335 to 371 (NIDDCASAACFHGATCHDRVASFYCECPHGRTGLLCH) constitute an EGF-like 9; calcium-binding domain. Ser-341 is a glycosylation site (O-linked (Glc...) serine). O-linked (Fuc...) threonine glycosylation occurs at Thr-349. The region spanning 372-410 (LNDACISNPCNEGSNCDTNPVNGKAICTCPSGYTGPACS) is the EGF-like 10 domain. An O-linked (Glc...) serine glycan is attached at Ser-378. The EGF-like 11; calcium-binding domain occupies 412–450 (DVDECSLGANPCEHAGKCINTLGSFECQCLQGYTGPRCE). Residues 420-421 (AN) form an interaction with DLL4 region. Thr-432 and Ser-435 together coordinate Ca(2+). O-linked (Glc...) serine glycosylation is present at Ser-435. An interaction with DLL4 region spans residues 448 to 452 (RCEID). The Ca(2+) site is built by Asp-452, Val-453, and Glu-455. Residues 452–488 (DVNECVSNPCQNDATCLDQIGEFQCICMPGYEGVHCE) enclose the EGF-like 12; calcium-binding domain. 3 disulfide bridges follow: Cys-456–Cys-467, Cys-461–Cys-476, and Cys-478–Cys-487. Ser-458 carries an O-linked (Glc...) serine glycan. Thr-466 carries an O-linked (Fuc...) threonine glycan. Ca(2+) contacts are provided by Asp-469 and Gln-470. Asn-490, Thr-491, and Glu-493 together coordinate Ca(2+). The EGF-like 13; calcium-binding domain occupies 490–526 (NTDECASSPCLHNGRCLDKINEFQCECPTGFTGHLCQ). 74 disulfides stabilise this stretch: Cys-494/Cys-505, Cys-499/Cys-514, Cys-516/Cys-525, Cys-532/Cys-543, Cys-537/Cys-552, Cys-554/Cys-563, Cys-570/Cys-580, Cys-575/Cys-589, Cys-591/Cys-600, Cys-607/Cys-618, Cys-612/Cys-627, Cys-629/Cys-638, Cys-645/Cys-655, Cys-650/Cys-664, Cys-666/Cys-675, Cys-682/Cys-693, Cys-687/Cys-702, Cys-704/Cys-713, Cys-720/Cys-730, Cys-725/Cys-739, Cys-741/Cys-750, Cys-757/Cys-768, Cys-762/Cys-777, Cys-779/Cys-788, Cys-795/Cys-806, Cys-800/Cys-815, Cys-817/Cys-826, Cys-833/Cys-844, Cys-838/Cys-855, Cys-857/Cys-866, Cys-873/Cys-884, Cys-878/Cys-893, Cys-895/Cys-904, Cys-911/Cys-922, Cys-916/Cys-931, Cys-933/Cys-942, Cys-949/Cys-960, Cys-954/Cys-969, Cys-971/Cys-980, Cys-987/Cys-998, Cys-992/Cys-1007, Cys-1009/Cys-1018, Cys-1025/Cys-1036, Cys-1030/Cys-1045, Cys-1047/Cys-1056, Cys-1063/Cys-1074, Cys-1068/Cys-1083, Cys-1085/Cys-1094, Cys-1101/Cys-1122, Cys-1116/Cys-1131, Cys-1133/Cys-1142, Cys-1149/Cys-1160, Cys-1154/Cys-1169, Cys-1171/Cys-1180, Cys-1187/Cys-1198, Cys-1192/Cys-1207, Cys-1209/Cys-1218, Cys-1238/Cys-1253, Cys-1255/Cys-1264, Cys-1271/Cys-1284, Cys-1276/Cys-1293, Cys-1295/Cys-1304, Cys-1311/Cys-1322, Cys-1316/Cys-1334, Cys-1336/Cys-1345, Cys-1352/Cys-1363, Cys-1357/Cys-1372, Cys-1374/Cys-1383, Cys-1391/Cys-1403, Cys-1397/Cys-1414, Cys-1416/Cys-1425, Cys-1449/Cys-1472, Cys-1454/Cys-1467, and Cys-1463/Cys-1479. Ser-496 carries O-linked (Glc...) serine glycosylation. Ca(2+) is bound by residues Asp-507 and Lys-508. In terms of domain architecture, EGF-like 14; calcium-binding spans 528 to 564 (DVDECASTPCKNGAKCLDGPNTYTCVCTEGYTGTHCE). A glycan (O-linked (Glc...) serine) is linked at Ser-534. The region spanning 566–601 (DIDECDPDPCHYGSCKDGVATFTCLCRPGYTGHHCE) is the EGF-like 15; calcium-binding domain. Positions 603–639 (NINECSSQPCRHGGTCQDRDNAYLCFCLKGTTGPNCE) constitute an EGF-like 16; calcium-binding domain. Ser-609 carries an O-linked (Glc...) serine glycan. Thr-617 is a glycosylation site (O-linked (Fuc...) threonine). One can recognise an EGF-like 17; calcium-binding domain in the interval 641–676 (NLDDCASSPCDSGTCLDKIDGYECACEPGYTGSMCN). O-linked (Glc...) serine glycosylation occurs at Ser-647. One can recognise an EGF-like 18; calcium-binding domain in the interval 678 to 714 (NIDECAGNPCHNGGTCEDGINGFTCRCPEGYHDPTCL). A glycan (O-linked (Fuc...) threonine) is linked at Thr-692. Residues 716 to 751 (EVNECNSNPCVHGACRDSLNGYKCDCDPGWSGTNCD) form the EGF-like 19; calcium-binding domain. Ser-722 carries O-linked (Glc...) serine glycosylation. The EGF-like 20 domain maps to 753-789 (NNNECESNPCVNGGTCKDMTSGYVCTCREGFSGPNCQ). Ser-759 carries O-linked (Glc...) serine glycosylation. An O-linked (Fuc...) threonine glycan is attached at Thr-767. Ser-784 is a glycosylation site (O-linked (GlcNAc) serine). Positions 791–827 (NINECASNPCLNQGTCIDDVAGYKCNCLLPYTGATCE) constitute an EGF-like 21; calcium-binding domain. O-linked (Glc...) serine glycosylation is present at Ser-797. O-linked (Fuc...) threonine glycosylation occurs at Thr-805. Residues 829 to 867 (VLAPCAPSPCRNGGECRQSEDYESFSCVCPTGWQGQTCE) form the EGF-like 22 domain. The 37-residue stretch at 869–905 (DINECVLSPCRHGASCQNTHGGYRCHCQAGYSGRNCE) folds into the EGF-like 23; calcium-binding domain. The EGF-like 24 domain maps to 907–943 (DIDDCRPNPCHNGGSCTDGINTAFCDCLPGFRGTFCE). An O-linked (Fuc) serine glycan is attached at Ser-921. Positions 945-981 (DINECASDPCRNGANCTDCVDSYTCTCPAGFSGIHCE) constitute an EGF-like 25; calcium-binding domain. A glycan (O-linked (Glc...) serine) is linked at Ser-951. The N-linked (GlcNAc...) asparagine glycan is linked to Asn-959. EGF-like domains follow at residues 983-1019 (NTPDCTESSCFNGGTCVDGINSFTCLCPPGFTGSYCQ), 1021-1057 (DVNECDSQPCLHGGTCQDGCGSYRCTCPQGYTGPNCQ), 1059-1095 (LVHWCDSSPCKNGGKCWQTHTQYRCECPSGWTGLYCD), 1097-1143 (PSVS…SYCE), and 1145-1181 (LVDECSPSPCQNGATCTDYLGGYSCKCVAGYHGVNCS). A glycan (O-linked (Fuc...) threonine) is linked at Thr-997. A glycan (O-linked (Glc...) serine) is linked at Ser-1027. Thr-1035 carries O-linked (Fuc...) threonine glycosylation. Ser-1065 carries an O-linked (Glc...) serine glycan. Thr-1159 is a glycosylation site (O-linked (Fuc...) threonine). A glycan (N-linked (GlcNAc...) asparagine) is linked at Asn-1179. Residues 1183-1219 (EIDECLSHPCQNGGTCLDLPNTYKCSCPRGTQGVHCE) form the EGF-like 31; calcium-binding domain. Ser-1189 is a glycosylation site (O-linked (Glc...) serine). Residue Thr-1197 is glycosylated (O-linked (Fuc...) threonine). The region spanning 1221 to 1265 (NVDDCNPPVDPVSRSPKCFNNGTCVDQVGGYSCTCPPGFVGERCE) is the EGF-like 32; calcium-binding domain. The N-linked (GlcNAc...) asparagine glycan is linked to Asn-1241. 4 EGF-like domains span residues 1267-1305 (DVNECLSNPCDARGTQNCVQRVNDFHCECRAGHTGRRCE), 1307-1346 (VINGCKGKPCKNGGTCAVASNTARGFICKCPAGFEGATCE), 1348-1384 (DARTCGSLRCLNGGTCISGPRSPTCLCLGPFTGPECQ), and 1387-1426 (ASSPCLGGNPCYNQGTCEPTSESPFYRCLCPAKFNGLLCH). Ser-1273 carries an O-linked (Glc...) serine glycan. O-linked (Fuc...) threonine glycosylation is present at Thr-1362. O-linked (GlcNAc...) threonine glycosylation is present at Thr-1379. An O-linked (Fuc...) threonine; alternate glycan is attached at Thr-1402. Thr-1402 carries an O-linked (GalNAc...) threonine; alternate glycan. LNR repeat units lie at residues 1449–1489 (CELP…PWKN), 1490–1531 (CTQS…CNPL), and 1532–1571 (YDQYCKDHFSDGHCDQGCNSAECEWDGLDCAEHVPERLAA). Ca(2+) is bound by residues Asp-1457, Asn-1460, Asp-1475, and Asp-1478. N-linked (GlcNAc...) asparagine glycosylation occurs at Asn-1489. Disulfide bonds link Cys-1490/Cys-1514, Cys-1496/Cys-1509, Cys-1505/Cys-1521, Cys-1536/Cys-1549, and Cys-1545/Cys-1561. Asn-1587 is a glycosylation site (N-linked (GlcNAc...) asparagine). The O-linked (GalNAc...) threonine glycan is linked to Thr-1725. The tract at residues 1728–1760 (PPPPAQLHFMYVAAAAFVLLFFVGCGVLLSRKR) is interaction with PSEN1. Residues 1736–1756 (FMYVAAAAFVLLFFVGCGVLL) form a helical membrane-spanning segment. Over 1757-2555 (SRKRRRQHGQ…QIARIPEAFK (799 aa)) the chain is Cytoplasmic. Residue Lys-1759 forms a Glycyl lysine isopeptide (Lys-Gly) (interchain with G-Cter in ubiquitin) linkage. The disordered stretch occupies residues 1780 to 1808 (KKKRREPLGEDSVGLKPLKNASDGALMDD). At Thr-1861 the chain carries Phosphothreonine. 6 ANK repeats span residues 1927–1956 (TGETALHLAARYSRSDAAKRLLEASADANI), 1960–1990 (MGRTPLHAAVSADAQGVFQILIRNRATDLDA), 1994–2023 (DGTTPLILAARLAVEGMLEDLINSHADVNA), 2027–2056 (LGKSALHWAAAVNNVDAAVVLLKNGANKDM), 2060–2089 (REETPLFLAAREGSYETAKVLLDHFANRDI), and 2095–2122 (RLPRDIAQERMHHDIVRLLDEYNLVRSP). An HIF1AN-binding region spans residues 1947 to 1955 (LLEASADAN). The residue at position 1955 (Asn-1955) is a (3S)-3-hydroxyasparagine; by HIF1AN; partial. The interval 2014 to 2022 (LINSHADVN) is HIF1AN-binding. Asn-2022 carries the (3S)-3-hydroxyasparagine; by HIF1AN modification. Disordered regions lie at residues 2151 to 2194 (PGVQ…LDSS), 2379 to 2447 (LVQT…QPLG), and 2483 to 2555 (TPPS…EAFK). Residues 2379–2408 (LVQTQQVQPQNLQMQQQNLQPANIQQQQSL) are compositionally biased toward low complexity. A compositionally biased stretch (polar residues) spans 2483-2502 (TPPSQHSYSSPVDNTPSHQL). A compositionally biased stretch (low complexity) spans 2512–2527 (PSPESPDQWSSSSPHS). Over residues 2528–2547 (NVSDWSEGVSSPPTSMQSQI) the composition is skewed to polar residues.

This sequence belongs to the NOTCH family. In terms of assembly, heterodimer of a C-terminal fragment N(TM) and an N-terminal fragment N(EC) which are probably linked by disulfide bonds. Interacts with DNER, DTX1, DTX2 and RBPJ/RBPSUH. Also interacts with MAML1, MAML2 and MAML3 which act as transcriptional coactivators for NOTCH1. The NOTCH1 intracellular domain interacts with SNW1; the interaction involves multimerized NOTCH1 NICD and is implicated in a formation of an intermediate preactivation complex which associates with DNA-bound CBF-1/RBPJ. The activated membrane-bound form interacts with AAK1 which promotes NOTCH1 stabilization. Forms a trimeric complex with FBXW7 and SGK1. Interacts with HIF1AN. HIF1AN negatively regulates the function of notch intracellular domain (NICD), accelerating myogenic differentiation. Interacts (via NICD) with SNAI1 (via zinc fingers); the interaction induces SNAI1 degradation via MDM2-mediated ubiquitination and inhibits SNAI1-induced cell invasion. Interacts (via NICD) with MDM2A. Interacts (via NICD) with BCL6; the interaction decreases MAML1 recruitment by NOTCH1 NICD on target genes DNA and inhibits NOTCH1 transactivation activity. Interacts with THBS4. Interacts (via the EGF-like repeat region) with CCN3 (via CTCK domain). Interacts (via EGF-like domains) with DLL4 (via N-terminal DSL and MNNL domains). Interacts with ZMIZ1. Interacts (via NICD domain) with MEGF10 (via the cytoplasmic domain). Interacts with DLL1 and JAG1. Interacts (via NICD domain) with PRAG1. Forms a complex with PRAG1, N1ICD and MAML1, in a MAML1-dependent manner. Interacts (via transmembrane region) with PSEN1; the interaction is direct. Interacts with ZFP64. In terms of processing, synthesized in the endoplasmic reticulum as an inactive form which is proteolytically cleaved by a furin-like convertase in the trans-Golgi network before it reaches the plasma membrane to yield an active, ligand-accessible form. Cleavage results in a C-terminal fragment N(TM) and a N-terminal fragment N(EC). Following ligand binding, it is cleaved by ADAM17 to yield a membrane-associated intermediate fragment called notch extracellular truncation (NEXT). Following endocytosis, this fragment is then cleaved by one of the catalytic subunits of gamma-secretase (PSEN1 or PSEN2), to release a Notch-derived peptide containing the intracellular domain (NICD) from the membrane. Phosphorylated. Post-translationally, O-glycosylated on the EGF-like domains. O-glucosylated at Ser-435 by KDELC1 and KDELC2. Contains both O-linked fucose and O-linked glucose in the EGF-like domains 11, 12 and 13, which are interacting with the residues on DLL4. O-linked glycosylation by GALNT11 is involved in determination of left/right symmetry: glycosylation promotes activation of NOTCH1, possibly by promoting cleavage by ADAM17, modulating the balance between motile and immotile (sensory) cilia at the left-right organiser (LRO). MFNG-, RFNG- and LFNG-mediated modification of O-fucose residues at specific EGF-like domains results in inhibition of its activation by JAG1 and enhancement of its activation by DLL1 via an increased binding to DLL1. In terms of processing, ubiquitinated. Undergoes 'Lys-29'-linked polyubiquitination by ITCH; promotes the lysosomal degradation of non-activated internalized NOTCH1. Deubiquitination by USP12 is required for transport of internalized non-activated receptor from late endosomes to lysosomes for degradation. Monoubiquitination at Lys-1759 is required for activation by gamma-secretase cleavage, it promotes interaction with AAK1, which stabilizes it. Deubiquitination by EIF3F is necessary for nuclear import of activated Notch. Hydroxylated at Asn-1955 by HIF1AN. Hydroxylated at Asn-2022 by HIF1AN. Hydroxylation reduces affinity for HI1AN and may thus indirectly modulate negative regulation of NICD. In fetal tissues most abundant in spleen, brain stem and lung. Also present in most adult tissues where it is found mainly in lymphoid tissues.

It localises to the cell membrane. It is found in the late endosome membrane. The protein localises to the nucleus. Functions as a receptor for membrane-bound ligands Jagged-1 (JAG1), Jagged-2 (JAG2) and Delta-1 (DLL1) to regulate cell-fate determination. Upon ligand activation through the released notch intracellular domain (NICD) it forms a transcriptional activator complex with RBPJ/RBPSUH and activates genes of the enhancer of split locus. Affects the implementation of differentiation, proliferation and apoptotic programs. Involved in angiogenesis; negatively regulates endothelial cell proliferation and migration and angiogenic sprouting. Involved in the maturation of both CD4(+) and CD8(+) cells in the thymus. Important for follicular differentiation and possibly cell fate selection within the follicle. During cerebellar development, functions as a receptor for neuronal DNER and is involved in the differentiation of Bergmann glia. Represses neuronal and myogenic differentiation. May play an essential role in postimplantation development, probably in some aspect of cell specification and/or differentiation. May be involved in mesoderm development, somite formation and neurogenesis. May enhance HIF1A function by sequestering HIF1AN away from HIF1A. Required for the THBS4 function in regulating protective astrogenesis from the subventricular zone (SVZ) niche after injury. Involved in determination of left/right symmetry by modulating the balance between motile and immotile (sensory) cilia at the left-right organiser (LRO). The sequence is that of Neurogenic locus notch homolog protein 1 (NOTCH1) from Homo sapiens (Human).